Reading from the N-terminus, the 327-residue chain is Fumigatonoid B endoperoxide isomerase nvfE (327 aa).

The disordered stretch occupies residues 1–22 (MGRDQVSHKRSQNSNVSEIPDL). Residues His-152, Asp-154, and His-234 each contribute to the Fe cation site.

The protein belongs to the PhyH family. As to quaternary structure, homodimer. Requires Fe cation as cofactor.

The enzyme catalyses fumigatonoid B = fumigatonoid C. It functions in the pathway secondary metabolite biosynthesis; terpenoid biosynthesis. Its function is as follows. Fumigatonoid B endoperoxide isomerase; part of the gene cluster that mediates the biosynthesis of novofumigatonin, a heavily oxygenated meroterpenoid containing a unique orthoester moiety. The first step of the pathway is the synthesis of 3,5-dimethylorsellinic acid (DMOA) by the polyketide synthase nvfA via condensation of one acetyl-CoA starter unit with 3 malonyl-CoA units and 2 methylations. DMOA is then converted to farnesyl-DMOA by the farnesyltransferase nvfB. Epoxydation by FAD-dependent monooxygenase nvfK, followed by a protonation-initiated cyclization catalyzed by the terpene cyclase nvfL leads to the production of asnavolin H. The short chain dehydrogenase nvfC then as a 3-OH dehydrogenase of asnovolin H to yield chemesin D. There are two branches to synthesize asnovolin A from chemesin D. In one branch, chemesin D undergoes Baeyer-Villiger oxidation by nvfH, methylation by nvfJ, and enoyl reduction by the nvfM D enoylreductase that reduces the double bond between C-5'and C-6', to form respectively asnovolin I, asnovolin K, and asnovolin A. In the other branch, the methylation precedes the Baeyer-Villiger oxidation and the enoyl reduction to yield asnovolin A via the asnovolin J intermediate. Asnovolin A is further converted to fumigatonoid A by the Fe(II)/2-oxoglutarate-dependent dioxygenase nvfI that catalyzes an endoperoxidation reaction. The alpha/beta hydrolase nvfD then acts as an epimerase that converts fumigatonoid A to its C-5' epimer, which then undergoes spontaneous or nvfD-catalyzed lactonization. The following step utilizes the ketoreductase nvfG to produce fumigatonoid B. The dioxygenase nvfE further converts fumigatonoid B into fumigatonoid C. Finally the Fe(II)/2-oxoglutarate-dependent dioxygenase nvfF catalyzes two rounds of oxidation to transform fumigatonoid C into the end product, novofumigatonin A. The protein is Fumigatonoid B endoperoxide isomerase nvfE of Aspergillus novofumigatus (strain IBT 16806).